Here is a 327-residue protein sequence, read N- to C-terminus: Methionyl-tRNA formyltransferase (327 aa).

A (6S)-5,6,7,8-tetrahydrofolate-binding site is contributed by 121–124 (SLLP).

Belongs to the Fmt family.

It carries out the reaction L-methionyl-tRNA(fMet) + (6R)-10-formyltetrahydrofolate = N-formyl-L-methionyl-tRNA(fMet) + (6S)-5,6,7,8-tetrahydrofolate + H(+). Functionally, attaches a formyl group to the free amino group of methionyl-tRNA(fMet). The formyl group appears to play a dual role in the initiator identity of N-formylmethionyl-tRNA by promoting its recognition by IF2 and preventing the misappropriation of this tRNA by the elongation apparatus. This is Methionyl-tRNA formyltransferase from Burkholderia vietnamiensis (strain G4 / LMG 22486) (Burkholderia cepacia (strain R1808)).